The sequence spans 314 residues: Beta-lactamase (314 aa).

A signal peptide (tat-type signal) is located at residues 1–39; sequence MHPSTSRPSRRTLLTATAGAALAAATLVPGTAHASSGGR. The tract at residues 31–50 is disordered; the sequence is TAHASSGGRGHGSGSVSDAE. The active-site Acyl-ester intermediate is Ser-89. A substrate-binding site is contributed by 259-261; it reads KTG.

It belongs to the class-A beta-lactamase family. Post-translationally, predicted to be exported by the Tat system. The position of the signal peptide cleavage has been experimentally proven.

The catalysed reaction is a beta-lactam + H2O = a substituted beta-amino acid. The sequence is that of Beta-lactamase from Streptomyces albus G.